Here is a 213-residue protein sequence, read N- to C-terminus: MTDQSHQCVIIGIAGASASGKSLIASTLYRELREQVGDEHIGVIPEDCYYKDQSHLSMEERVKTNYDHPSAMDHSLLLEHLQALKRGSAIDLPVYSYVEHTRMKETVKVEPKKVIILEGILLLTDARLRDELNFSIFVDTPLDICLMRRIKRDVNERGRSMDSVMAQYQKTVRPMFLQFIEPSKQYADIIVPRGGKNRIAIDILKAKISQFFE.

15-22 (GASASGKS) is an ATP binding site.

It belongs to the uridine kinase family.

It localises to the cytoplasm. The catalysed reaction is uridine + ATP = UMP + ADP + H(+). It catalyses the reaction cytidine + ATP = CMP + ADP + H(+). The protein operates within pyrimidine metabolism; CTP biosynthesis via salvage pathway; CTP from cytidine: step 1/3. It functions in the pathway pyrimidine metabolism; UMP biosynthesis via salvage pathway; UMP from uridine: step 1/1. The protein is Uridine kinase of Escherichia fergusonii (strain ATCC 35469 / DSM 13698 / CCUG 18766 / IAM 14443 / JCM 21226 / LMG 7866 / NBRC 102419 / NCTC 12128 / CDC 0568-73).